The sequence spans 78 residues: Large ribosomal subunit protein bL28 (78 aa).

Residues 1–20 (MSRVCQVTGKRPVTGNNRSH) are disordered.

It belongs to the bacterial ribosomal protein bL28 family.

This is Large ribosomal subunit protein bL28 from Vibrio parahaemolyticus serotype O3:K6 (strain RIMD 2210633).